A 427-amino-acid chain; its full sequence is Glutamate-1-semialdehyde 2,1-aminomutase (427 aa).

K265 is modified (N6-(pyridoxal phosphate)lysine).

Belongs to the class-III pyridoxal-phosphate-dependent aminotransferase family. HemL subfamily. Homodimer. Pyridoxal 5'-phosphate is required as a cofactor.

The protein localises to the cytoplasm. It catalyses the reaction (S)-4-amino-5-oxopentanoate = 5-aminolevulinate. The protein operates within porphyrin-containing compound metabolism; protoporphyrin-IX biosynthesis; 5-aminolevulinate from L-glutamyl-tRNA(Glu): step 2/2. The chain is Glutamate-1-semialdehyde 2,1-aminomutase from Actinobacillus succinogenes (strain ATCC 55618 / DSM 22257 / CCUG 43843 / 130Z).